The primary structure comprises 67 residues: Large ribosomal subunit protein uL29 (67 aa).

It belongs to the universal ribosomal protein uL29 family.

The protein is Large ribosomal subunit protein uL29 of Methanothrix thermoacetophila (strain DSM 6194 / JCM 14653 / NBRC 101360 / PT) (Methanosaeta thermophila).